Here is a 488-residue protein sequence, read N- to C-terminus: Glutamyl-tRNA(Gln) amidotransferase subunit A (488 aa).

Residues lysine 77 and serine 152 each act as charge relay system in the active site. Serine 176 acts as the Acyl-ester intermediate in catalysis.

This sequence belongs to the amidase family. GatA subfamily. In terms of assembly, heterotrimer of A, B and C subunits.

The enzyme catalyses L-glutamyl-tRNA(Gln) + L-glutamine + ATP + H2O = L-glutaminyl-tRNA(Gln) + L-glutamate + ADP + phosphate + H(+). Its function is as follows. Allows the formation of correctly charged Gln-tRNA(Gln) through the transamidation of misacylated Glu-tRNA(Gln) in organisms which lack glutaminyl-tRNA synthetase. The reaction takes place in the presence of glutamine and ATP through an activated gamma-phospho-Glu-tRNA(Gln). The protein is Glutamyl-tRNA(Gln) amidotransferase subunit A of Streptococcus sanguinis (strain SK36).